The following is a 203-amino-acid chain: Small ribosomal subunit protein uS4 (203 aa).

Positions 93 to 156 (RRLDNVVYRL…MKVPAILEAV (64 aa)) constitute an S4 RNA-binding domain.

It belongs to the universal ribosomal protein uS4 family. Part of the 30S ribosomal subunit. Contacts protein S5. The interaction surface between S4 and S5 is involved in control of translational fidelity.

Functionally, one of the primary rRNA binding proteins, it binds directly to 16S rRNA where it nucleates assembly of the body of the 30S subunit. In terms of biological role, with S5 and S12 plays an important role in translational accuracy. In Streptococcus agalactiae serotype Ia (strain ATCC 27591 / A909 / CDC SS700), this protein is Small ribosomal subunit protein uS4.